Here is a 273-residue protein sequence, read N- to C-terminus: MTNSTIRIAVVGAGGRMGRQLIQAITQTKGVVLGAAVERAGSTLVGSDAGELAGTGLLNIAVSDDLSKVTDHFDVLIDFTRPEGTLEHLAICRAHHKAMVIGTTGFDDAGKAAISAASAEIGIVFAANFSVGVNVVLKLLEKAAKVMGDYTDIEIIEAHHRYKVDAPSGTALAMGEAIAESLGRSLKDCAVYTREGHTGERKPGTIGFATVRAGDIVGEHTAMFADIGERVEITHKATSRMTFANGAVKSAIWLSNHDNGLFDMRDVLSLNEL.

Residues 12 to 17 and glutamate 38 each bind NAD(+); that span reads GAGGRM. An NADP(+)-binding site is contributed by arginine 39. Residues 102-104 and 126-129 contribute to the NAD(+) site; these read GTT and AANF. The active-site Proton donor/acceptor is the histidine 159. (S)-2,3,4,5-tetrahydrodipicolinate is bound at residue histidine 160. Lysine 163 (proton donor) is an active-site residue. (S)-2,3,4,5-tetrahydrodipicolinate is bound at residue 169–170; sequence GT.

The protein belongs to the DapB family. In terms of assembly, homotetramer.

It is found in the cytoplasm. It carries out the reaction (S)-2,3,4,5-tetrahydrodipicolinate + NAD(+) + H2O = (2S,4S)-4-hydroxy-2,3,4,5-tetrahydrodipicolinate + NADH + H(+). The enzyme catalyses (S)-2,3,4,5-tetrahydrodipicolinate + NADP(+) + H2O = (2S,4S)-4-hydroxy-2,3,4,5-tetrahydrodipicolinate + NADPH + H(+). It functions in the pathway amino-acid biosynthesis; L-lysine biosynthesis via DAP pathway; (S)-tetrahydrodipicolinate from L-aspartate: step 4/4. In terms of biological role, catalyzes the conversion of 4-hydroxy-tetrahydrodipicolinate (HTPA) to tetrahydrodipicolinate. The chain is 4-hydroxy-tetrahydrodipicolinate reductase from Yersinia enterocolitica serotype O:8 / biotype 1B (strain NCTC 13174 / 8081).